The chain runs to 101 residues: uncharacterized protein (101 aa).

Transmembrane regions (helical) follow at residues 3 to 23 (IVYE…LFLF) and 39 to 59 (AFLS…LIFF).

The protein localises to the membrane. This is an uncharacterized protein from Saccharomyces cerevisiae (strain ATCC 204508 / S288c) (Baker's yeast).